Reading from the N-terminus, the 866-residue chain is Transcription factor E2F8 (866 aa).

2 positions are modified to phosphoserine: S71 and S102. DNA-binding regions lie at residues 113–182 (RKEK…TWHG) and 261–347 (RKDK…KWTG). Disordered stretches follow at residues 409-429 (RKINSAPSSPIKTHKAESTQN), 532-632 (TITP…STTL), and 794-837 (TNGQ…GSPC). Phosphoserine is present on residues S413 and S417. Residues 543–552 (VCPTTSSNAM) show a composition bias toward polar residues. Composition is skewed to basic and acidic residues over residues 588 to 603 (QGAKNREREPAREKGS) and 612 to 624 (SGSKKKFKEDQKA). A compositionally biased stretch (polar residues) spans 794–805 (TNGQSFAGTGAQ). The segment covering 825-834 (TPGGPTKPTG) has biased composition (low complexity).

This sequence belongs to the E2F/DP family. Homodimer and heterodimer: mainly forms homodimers and, to a lesser extent, heterodimers with E2F8. Dimerization is important for DNA-binding. Interacts with HIF1A.

It is found in the nucleus. Its function is as follows. Atypical E2F transcription factor that participates in various processes such as angiogenesis and polyploidization of specialized cells. Mainly acts as a transcription repressor that binds DNA independently of DP proteins and specifically recognizes the E2 recognition site 5'-TTTC[CG]CGC-3'. Directly represses transcription of classical E2F transcription factors such as E2F1: component of a feedback loop in S phase by repressing the expression of E2F1, thereby preventing p53/TP53-dependent apoptosis. Plays a key role in polyploidization of cells in placenta and liver by regulating the endocycle, probably by repressing genes promoting cytokinesis and antagonizing action of classical E2F proteins (E2F1, E2F2 and/or E2F3). Required for placental development by promoting polyploidization of trophoblast giant cells. Acts as a promoter of sprouting angiogenesis, possibly by acting as a transcription activator: associates with HIF1A, recognizes and binds the VEGFA promoter, which is different from canonical E2 recognition site, and activates expression of the VEGFA gene. The protein is Transcription factor E2F8 (E2F8) of Bos taurus (Bovine).